Reading from the N-terminus, the 211-residue chain is Large ribosomal subunit protein bL25 (211 aa).

Residues 1–18 (MAKTHEIKAERRADEGKG) show a composition bias toward basic and acidic residues. Positions 1–20 (MAKTHEIKAERRADEGKGAS) are disordered.

Belongs to the bacterial ribosomal protein bL25 family. CTC subfamily. In terms of assembly, part of the 50S ribosomal subunit; part of the 5S rRNA/L5/L18/L25 subcomplex. Contacts the 5S rRNA. Binds to the 5S rRNA independently of L5 and L18.

Functionally, this is one of the proteins that binds to the 5S RNA in the ribosome where it forms part of the central protuberance. In Xanthomonas oryzae pv. oryzae (strain MAFF 311018), this protein is Large ribosomal subunit protein bL25.